Consider the following 220-residue polypeptide: MGAAARTLRLALGLLLLATLLRPADACSCSPVHPQQAFCNADVVIRAKAVSEKEVDSGNDIYGNPIKRIQYEIKQIKMFKGPEKDIEFIYTAPSSAVCGVSLDVGGKKEYLIAGKAEGDGKMHITLCDFIVPWDTLSTTQKKSLNHRYQMGCECKITRCPMIPCYISSPDECLWMDWVTEKNINGHQAKFFACIKRSDGSCAWYRGAAPPKQEFLDIEDP.

Positions 1–26 are cleaved as a signal peptide; it reads MGAAARTLRLALGLLLLATLLRPADA. A Zn(2+)-binding site is contributed by cysteine 27. Involved in metalloproteinase-binding regions lie at residues 27-30 and 95-96; these read CSCS and SA. Cystine bridges form between cysteine 27/cysteine 98, cysteine 29/cysteine 127, cysteine 39/cysteine 152, cysteine 154/cysteine 201, cysteine 159/cysteine 164, and cysteine 172/cysteine 193. One can recognise an NTR domain in the interval 27-152; it reads CSCSPVHPQQ…SLNHRYQMGC (126 aa).

The protein belongs to the protease inhibitor I35 (TIMP) family. As to quaternary structure, interacts (via the C-terminal) with MMP2 (via the C-terminal PEX domain); the interaction inhibits the MMP2 activity. In terms of processing, the activity of TIMP2 is dependent on the presence of disulfide bonds.

The protein localises to the secreted. Its function is as follows. Complexes with metalloproteinases (such as collagenases) and irreversibly inactivates them by binding to their catalytic zinc cofactor. Known to act on MMP-1, MMP-2, MMP-3, MMP-7, MMP-8, MMP-9, MMP-10, MMP-13, MMP-14, MMP-15, MMP-16 and MMP-19. This Homo sapiens (Human) protein is Metalloproteinase inhibitor 2 (TIMP2).